A 239-amino-acid chain; its full sequence is MKITILSLFPSIITPFFENSIMKKVISKGIISCEVISIRNFSDDKHKRCDDIPYGGGAGMVLKAQPISAALDYVNARSKTTIFVSPSGLKYNQKLAYDLSKKDELVIICGRYEGLDQRIIDLYVDFEISVGDYVLSSGEVAALVIIDSVYRLLEGVINPNSLLEESFSCECGLLEYPHYTRPYEFKGLEVPNVLLSGHHEEIRKWRFMKSIEKTKKNRYDLYLKYLEMRGENDGFNKKN.

S-adenosyl-L-methionine is bound by residues Gly-110 and 130 to 135; that span reads VGDYVL.

It belongs to the RNA methyltransferase TrmD family. As to quaternary structure, homodimer.

The protein localises to the cytoplasm. The enzyme catalyses guanosine(37) in tRNA + S-adenosyl-L-methionine = N(1)-methylguanosine(37) in tRNA + S-adenosyl-L-homocysteine + H(+). In terms of biological role, specifically methylates guanosine-37 in various tRNAs. The protein is tRNA (guanine-N(1)-)-methyltransferase of Borrelia turicatae (strain 91E135).